The following is a 121-amino-acid chain: Small ribosomal subunit protein uS13 (121 aa).

The disordered stretch occupies residues histidine 91–lysine 121.

The protein belongs to the universal ribosomal protein uS13 family. Part of the 30S ribosomal subunit. Forms a loose heterodimer with protein S19. Forms two bridges to the 50S subunit in the 70S ribosome.

Located at the top of the head of the 30S subunit, it contacts several helices of the 16S rRNA. In the 70S ribosome it contacts the 23S rRNA (bridge B1a) and protein L5 of the 50S subunit (bridge B1b), connecting the 2 subunits; these bridges are implicated in subunit movement. Contacts the tRNAs in the A and P-sites. This is Small ribosomal subunit protein uS13 from Bordetella avium (strain 197N).